Consider the following 759-residue polypeptide: Short transient receptor potential channel 1 (759 aa).

The segment at 1 to 30 (MMAALYPSTDLSGASSSSLPSSPSSSSPNE) is disordered. Topologically, residues 1-352 (MMAALYPSTD…GRIIHTPFMK (352 aa)) are cytoplasmic. The segment covering 15 to 28 (SSSSLPSSPSSSSP) has biased composition (low complexity). ANK repeat units lie at residues 46–75 (LNEK…SGDL), 83–112 (LGRN…QKLM), and 124–153 (MDVA…SLPK). Residues 353-373 (FIIHGASYFTFLLLLNLYSLV) traverse the membrane as a helical segment. The Extracellular portion of the chain corresponds to 374–381 (YNEDKKNT). Residues 382–402 (MGPALERIDYLLILWIIGMIW) form a helical membrane-spanning segment. Residues 403 to 461 (SDIKRLWYEGLEDFLEESRNQLSFVMNSLYLATFALKVVAHNKFHDFADRKDWDAFHPT) lie on the Cytoplasmic side of the membrane. Residues 462–482 (LVAEGLFAFANVLSYLRLFFM) traverse the membrane as a helical segment. The Extracellular portion of the chain corresponds to 483–505 (YTTSSILGPLQISMGQMLQDFGK). A helical transmembrane segment spans residues 506–526 (FLGMFLLVLFSFTIGLTQLYD). Topologically, residues 527-552 (KGYTPKEQKDCVGIFCEQQSNDTFHS) are cytoplasmic. Residues 553–573 (FIGTCFALFWYIFSLAHVAIF) traverse the membrane as a helical segment. The Extracellular portion of the chain corresponds to 574–582 (VTRFSYGEE). Residues 583 to 603 (LQSFVGAVIVGTYNVVVVIVL) form a helical membrane-spanning segment. At 604-759 (TKLLVAMLHK…SKYAMFYPRN (156 aa)) the chain is on the cytoplasmic side.

This sequence belongs to the transient receptor (TC 1.A.4) family. STrpC subfamily. TRPC1 sub-subfamily. Homotetramer and heterotetramer with TRPC4 and/or TRPC5. Interacts with TRPC4 and TRPC5. Interacts with ITPR3. Interacts with MX1 and RNF24. Interacts with FKBP4. Interacts with TRPC4AP. Interacts with PLSCR1. Interacts with PKD2L2. Forms a heterotetramer with PKD2 with a 2:2 stoichiometry; has distinct channel properties separate from PKD2 or TRPC1 homomers alone. Activation of PRKCA induces phosphorylation of TRPC1 and subsequent Ca2+ entry into cells.

It localises to the cell membrane. The enzyme catalyses Ca(2+)(in) = Ca(2+)(out). Forms a receptor-activated non-selective calcium permeant cation channel. Probably is operated by a phosphatidylinositol second messenger system activated by receptor tyrosine kinases or G-protein coupled receptors. Also activated by intracellular calcium store depletion. This Oryctolagus cuniculus (Rabbit) protein is Short transient receptor potential channel 1 (TRPC1).